A 527-amino-acid chain; its full sequence is GMP synthase [glutamine-hydrolyzing] (527 aa).

Positions Thr13–Lys202 constitute a Glutamine amidotransferase type-1 domain. Cys89 (nucleophile) is an active-site residue. Residues His176 and Glu178 contribute to the active site. Residues Trp203–Arg402 enclose the GMPS ATP-PPase domain. Ser231 to Thr237 is a binding site for ATP. Residues Arg304, Asp464, Lys519, and Glu525 each contribute to the XMP site.

As to quaternary structure, homodimer. Requires Mg(2+) as cofactor.

It localises to the cytoplasm. It is found in the cytosol. The catalysed reaction is XMP + L-glutamine + ATP + H2O = GMP + L-glutamate + AMP + diphosphate + 2 H(+). It participates in purine metabolism; GMP biosynthesis; GMP from XMP (L-Gln route): step 1/1. In terms of biological role, catalyzes the conversion of xanthine monophosphate (XMP) to GMP in the presence of glutamine and ATP through an adenyl-XMP intermediate. The sequence is that of GMP synthase [glutamine-hydrolyzing] (GUA1) from Yarrowia lipolytica (strain CLIB 122 / E 150) (Yeast).